A 561-amino-acid chain; its full sequence is Potassium-transporting ATPase potassium-binding subunit (561 aa).

11 consecutive transmembrane segments (helical) span residues 5–25 (LAAG…YVPL), 60–80 (CGYA…LYVL), 86–106 (VLPL…NTAV), 131–151 (GLAV…VALI), 177–197 (ILLP…VIQS), 247–267 (PTPL…VALT), 281–301 (LTVL…TTAA), 376–396 (GLYG…LLVG), 415–435 (ALAV…TVVL), 489–509 (LGLC…ALAG), and 531–551 (FAGL…FPVL).

It belongs to the KdpA family. As to quaternary structure, the system is composed of three essential subunits: KdpA, KdpB and KdpC.

It localises to the cell membrane. Functionally, part of the high-affinity ATP-driven potassium transport (or Kdp) system, which catalyzes the hydrolysis of ATP coupled with the electrogenic transport of potassium into the cytoplasm. This subunit binds the extracellular potassium ions and delivers the ions to the membrane domain of KdpB through an intramembrane tunnel. The protein is Potassium-transporting ATPase potassium-binding subunit of Nocardia farcinica (strain IFM 10152).